Consider the following 446-residue polypeptide: MLKHFARWRLGSQLLKGCAAPVRQASKTSSAENLIAGTEEPQKKFVNPFSQPAPALSNDTISENKEERDKRLKVLQLEADIAHQEGRRVPSLEFFKDHHWEHVLTLPTKSARIKYFGYLWQIEMKKEADQRKKAERAKEAERRVAEMRKEREENTHIIYGLGHTSLFLRIYDTTINHWQNNRLTRAMQFAPKMVLDCSYDEHMNNREATYAAKQLMMCFAENRMNDEPFDLHYCNTQMDSRCMQSLQRYIPTMHNPEFPINLHSKCFTELFPKQNLVYLTPHCREDLVTYNPDDIYIVGAMVDTMNNEPLSLAKAKRLGLRMARLPLDRYLQWGSGSGKSLTLNQMINIMLDLKKTGDWDTALKHVPRRKVVQNEFQPRREKDHWSTGTRARKLNMRIDHLFDFDENRRQATSYATPQNVRQRREGLEFQLDTWATGKQKKKQRQN.

The N-terminal 24 residues, 1–24 (MLKHFARWRLGSQLLKGCAAPVRQ), are a transit peptide targeting the mitochondrion. The tract at residues 41-67 (PQKKFVNPFSQPAPALSNDTISENKEE) is disordered. Ser50 and Ser57 each carry phosphoserine. At Thr60 the chain carries Phosphothreonine. Phosphoserine is present on Ser62. Residues 119 to 158 (LWQIEMKKEADQRKKAERAKEAERRVAEMRKEREENTHII) adopt a coiled-coil conformation. Residues 179-373 (QNNRLTRAMQ…KHVPRRKVVQ (195 aa)) enclose the SAM-dependent MTase TRM10-type domain.

The protein belongs to the class IV-like SAM-binding methyltransferase superfamily. TRM10 family. In terms of assembly, component of mitochondrial ribonuclease P, a complex composed of rswl/MRPP1, scu/MRPP2 and mldr/MRPP3.

The protein resides in the mitochondrion. Its function is as follows. Mitochondrial tRNA N1-methyltransferase involved in mitochondrial tRNA maturation. Component of mitochondrial ribonuclease P, a complex composed of rswl/MRPP1, scu/MRPP2 and mldr/MRPP3., which cleaves tRNA molecules in their 5'-ends. Essential for the structural and functional integrity of mitochondria. Function is essential for pupal development. In Drosophila melanogaster (Fruit fly), this protein is Mitochondrial ribonuclease P protein 1 homolog.